The following is a 190-amino-acid chain: Imidazoleglycerol-phosphate dehydratase (190 aa).

Belongs to the imidazoleglycerol-phosphate dehydratase family.

Its subcellular location is the cytoplasm. The catalysed reaction is D-erythro-1-(imidazol-4-yl)glycerol 3-phosphate = 3-(imidazol-4-yl)-2-oxopropyl phosphate + H2O. It participates in amino-acid biosynthesis; L-histidine biosynthesis; L-histidine from 5-phospho-alpha-D-ribose 1-diphosphate: step 6/9. The polypeptide is Imidazoleglycerol-phosphate dehydratase (Sulfurovum sp. (strain NBC37-1)).